Here is a 419-residue protein sequence, read N- to C-terminus: MDKFRVQGPTTLQGEVTISGAKNAALPILFAALLAEEPVEIQNVPKLKDVDTSMKLLSQLGAKVERNGSVHIDASQVNVFCAPYDLVKTMRASIWALGPLVARFGQGQVSLPGGCTIGARPVDLHITGLEQLGATIKLEEGYVKASVEGRLKGAHIVMDKVSVGATVTIMCAATLAEGTTIIENAAREPEIVDTANFLVTLGAKIAGQGTDRITIEGVERLGGGVYRVLPDRIETGTFLVAAAISRGKILCRNAQPDTLDAVLAKLRDAGADIEVGEDWISLDMHGKRPKAVNVRTAPHPAFPTDMQAQFTLLNLVAQGTGFITETVFENRFMHVPELSRMGARAEIESNTVICHGVETLSGAQVMATDLRASASLVLAGCIAEGTTIVDRIYHIDRGYERIEDKLRALGANIERVKGE.

Residue 22–23 participates in phosphoenolpyruvate binding; the sequence is KN. R91 contacts UDP-N-acetyl-alpha-D-glucosamine. The active-site Proton donor is the C115. C115 carries the 2-(S-cysteinyl)pyruvic acid O-phosphothioketal modification. UDP-N-acetyl-alpha-D-glucosamine-binding positions include 120 to 124, 160 to 163, D305, and V327; these read RPVDL and KVSV.

It belongs to the EPSP synthase family. MurA subfamily.

Its subcellular location is the cytoplasm. It catalyses the reaction phosphoenolpyruvate + UDP-N-acetyl-alpha-D-glucosamine = UDP-N-acetyl-3-O-(1-carboxyvinyl)-alpha-D-glucosamine + phosphate. It functions in the pathway cell wall biogenesis; peptidoglycan biosynthesis. Functionally, cell wall formation. Adds enolpyruvyl to UDP-N-acetylglucosamine. In Salmonella schwarzengrund (strain CVM19633), this protein is UDP-N-acetylglucosamine 1-carboxyvinyltransferase.